Reading from the N-terminus, the 159-residue chain is ATP synthase subunit b (159 aa).

The helical transmembrane segment at 7–27 (DFIWTLINFFVLLFILKILLY) threads the bilayer.

It belongs to the ATPase B chain family. F-type ATPases have 2 components, F(1) - the catalytic core - and F(0) - the membrane proton channel. F(1) has five subunits: alpha(3), beta(3), gamma(1), delta(1), epsilon(1). F(0) has three main subunits: a(1), b(2) and c(10-14). The alpha and beta chains form an alternating ring which encloses part of the gamma chain. F(1) is attached to F(0) by a central stalk formed by the gamma and epsilon chains, while a peripheral stalk is formed by the delta and b chains.

The protein resides in the cell membrane. Its function is as follows. F(1)F(0) ATP synthase produces ATP from ADP in the presence of a proton or sodium gradient. F-type ATPases consist of two structural domains, F(1) containing the extramembraneous catalytic core and F(0) containing the membrane proton channel, linked together by a central stalk and a peripheral stalk. During catalysis, ATP synthesis in the catalytic domain of F(1) is coupled via a rotary mechanism of the central stalk subunits to proton translocation. In terms of biological role, component of the F(0) channel, it forms part of the peripheral stalk, linking F(1) to F(0). The chain is ATP synthase subunit b from Carboxydothermus hydrogenoformans (strain ATCC BAA-161 / DSM 6008 / Z-2901).